The sequence spans 696 residues: Elongation factor G (696 aa).

Residues 8–290 enclose the tr-type G domain; that stretch reads ERYRNIGIMA…AVLDYLPSPL (283 aa). Residues 17 to 24, 88 to 92, and 142 to 145 contribute to the GTP site; these read AHIDAGKT, DTPGH, and NKMD.

It belongs to the TRAFAC class translation factor GTPase superfamily. Classic translation factor GTPase family. EF-G/EF-2 subfamily.

It is found in the cytoplasm. Functionally, catalyzes the GTP-dependent ribosomal translocation step during translation elongation. During this step, the ribosome changes from the pre-translocational (PRE) to the post-translocational (POST) state as the newly formed A-site-bound peptidyl-tRNA and P-site-bound deacylated tRNA move to the P and E sites, respectively. Catalyzes the coordinated movement of the two tRNA molecules, the mRNA and conformational changes in the ribosome. This is Elongation factor G from Nitrosomonas europaea (strain ATCC 19718 / CIP 103999 / KCTC 2705 / NBRC 14298).